The sequence spans 203 residues: Glycerol-3-phosphate acyltransferase (203 aa).

4 helical membrane-spanning segments follow: residues 4–24 (LALI…AVLI), 68–88 (IPVW…VIAI), 117–137 (PIGL…AVLF), and 155–175 (TWMF…LIVF).

This sequence belongs to the PlsY family. In terms of assembly, probably interacts with PlsX.

It is found in the cell inner membrane. It catalyses the reaction an acyl phosphate + sn-glycerol 3-phosphate = a 1-acyl-sn-glycero-3-phosphate + phosphate. The protein operates within lipid metabolism; phospholipid metabolism. In terms of biological role, catalyzes the transfer of an acyl group from acyl-phosphate (acyl-PO(4)) to glycerol-3-phosphate (G3P) to form lysophosphatidic acid (LPA). This enzyme utilizes acyl-phosphate as fatty acyl donor, but not acyl-CoA or acyl-ACP. The chain is Glycerol-3-phosphate acyltransferase from Vibrio campbellii (strain ATCC BAA-1116).